The sequence spans 94 residues: Translation initiation factor IF-1 (94 aa).

Residues 1–72 (MAKEELIQFE…EKGRLIFRHK (72 aa)) form the S1-like domain. Positions 71 to 94 (HKDERPGGTGAPRGAPPRGQFRRR) are disordered. The segment covering 82–94 (PRGAPPRGQFRRR) has biased composition (low complexity).

Belongs to the IF-1 family. Component of the 30S ribosomal translation pre-initiation complex which assembles on the 30S ribosome in the order IF-2 and IF-3, IF-1 and N-formylmethionyl-tRNA(fMet); mRNA recruitment can occur at any time during PIC assembly.

The protein resides in the cytoplasm. Its function is as follows. One of the essential components for the initiation of protein synthesis. Stabilizes the binding of IF-2 and IF-3 on the 30S subunit to which N-formylmethionyl-tRNA(fMet) subsequently binds. Helps modulate mRNA selection, yielding the 30S pre-initiation complex (PIC). Upon addition of the 50S ribosomal subunit IF-1, IF-2 and IF-3 are released leaving the mature 70S translation initiation complex. The sequence is that of Translation initiation factor IF-1 from Rhodopseudomonas palustris (strain BisB5).